Reading from the N-terminus, the 144-residue chain is Large ribosomal subunit protein uL13 (144 aa).

It belongs to the universal ribosomal protein uL13 family. In terms of assembly, part of the 50S ribosomal subunit.

Functionally, this protein is one of the early assembly proteins of the 50S ribosomal subunit, although it is not seen to bind rRNA by itself. It is important during the early stages of 50S assembly. The sequence is that of Large ribosomal subunit protein uL13 from Clostridium tetani (strain Massachusetts / E88).